The primary structure comprises 396 residues: Pectinesterase (396 aa).

An N-terminal signal peptide occupies residues 1–21 (MQSKTLYLKATALLGGCTVFA). Threonine 174 lines the substrate pocket. The active-site Proton donor is aspartate 232. Catalysis depends on aspartate 259, which acts as the Nucleophile. Substrate-binding residues include arginine 324 and tryptophan 326.

Belongs to the pectinesterase family.

Its subcellular location is the secreted. The catalysed reaction is [(1-&gt;4)-alpha-D-galacturonosyl methyl ester](n) + n H2O = [(1-&gt;4)-alpha-D-galacturonosyl](n) + n methanol + n H(+). It participates in glycan metabolism; pectin degradation; 2-dehydro-3-deoxy-D-gluconate from pectin: step 1/5. Functionally, involved in maceration and soft-rotting of plant tissue. The polypeptide is Pectinesterase (pme) (Ralstonia nicotianae (strain ATCC BAA-1114 / GMI1000) (Ralstonia solanacearum)).